Reading from the N-terminus, the 338-residue chain is Nicotinate-nucleotide--dimethylbenzimidazole phosphoribosyltransferase (338 aa).

The active-site Proton acceptor is the Glu-305.

This sequence belongs to the CobT family.

The catalysed reaction is 5,6-dimethylbenzimidazole + nicotinate beta-D-ribonucleotide = alpha-ribazole 5'-phosphate + nicotinate + H(+). The protein operates within nucleoside biosynthesis; alpha-ribazole biosynthesis; alpha-ribazole from 5,6-dimethylbenzimidazole: step 1/2. Catalyzes the synthesis of alpha-ribazole-5'-phosphate from nicotinate mononucleotide (NAMN) and 5,6-dimethylbenzimidazole (DMB). The sequence is that of Nicotinate-nucleotide--dimethylbenzimidazole phosphoribosyltransferase from Rhizobium rhizogenes (strain K84 / ATCC BAA-868) (Agrobacterium radiobacter).